The following is a 402-amino-acid chain: LIM/homeobox protein Lhx5 (402 aa).

2 consecutive LIM zinc-binding domains span residues 3–61 and 62–125; these read VHCA…RRFG and TKCA…SSSL. Over residues 124–135 the composition is skewed to low complexity; that stretch reads SLKEGSLNSVSS. Disordered regions lie at residues 124 to 186 and 298 to 402; these read SLKE…PRTT and HGPP…AAVW. Over residues 151–167 the composition is skewed to basic and acidic residues; the sequence is DDPKETDNSTSSDKETA. A DNA-binding region (homeobox) is located at residues 180–239; sequence RRGPRTTIKAKQLETLKAAFAATPKPTRHIREQLAQETGLNMRVIQVWFQNRRSKERRMK. 2 stretches are compositionally biased toward low complexity: residues 300 to 311 and 322 to 336; these read PPSQAQSPADSS and PLGALEPPLAGPHAA.

Expressed in fetal brain and in various regions of the adult central nervous system including the spinal cord, the thalamus, and the cerebellum.

It is found in the nucleus. Its function is as follows. Plays an essential role in the regulation of neuronal differentiation and migration during development of the central nervous system. This is LIM/homeobox protein Lhx5 (LHX5) from Homo sapiens (Human).